The chain runs to 398 residues: 1-deoxy-D-xylulose 5-phosphate reductoisomerase (398 aa).

The NADPH site is built by Thr-28, Gly-29, Ser-30, Ile-31, Gly-54, Asn-57, and Asn-135. Lys-136 serves as a coordination point for 1-deoxy-D-xylulose 5-phosphate. Glu-137 is an NADPH binding site. A Mn(2+)-binding site is contributed by Asp-159. Residues Ser-160, Glu-161, Ser-185, and His-208 each contribute to the 1-deoxy-D-xylulose 5-phosphate site. Position 161 (Glu-161) interacts with Mn(2+). NADPH is bound at residue Gly-214. Ser-221, Asn-226, Lys-227, and Glu-230 together coordinate 1-deoxy-D-xylulose 5-phosphate. Glu-230 is a binding site for Mn(2+).

Belongs to the DXR family. Requires Mg(2+) as cofactor. Mn(2+) is required as a cofactor.

It carries out the reaction 2-C-methyl-D-erythritol 4-phosphate + NADP(+) = 1-deoxy-D-xylulose 5-phosphate + NADPH + H(+). The protein operates within isoprenoid biosynthesis; isopentenyl diphosphate biosynthesis via DXP pathway; isopentenyl diphosphate from 1-deoxy-D-xylulose 5-phosphate: step 1/6. Its function is as follows. Catalyzes the NADPH-dependent rearrangement and reduction of 1-deoxy-D-xylulose-5-phosphate (DXP) to 2-C-methyl-D-erythritol 4-phosphate (MEP). This is 1-deoxy-D-xylulose 5-phosphate reductoisomerase from Rhodococcus jostii (strain RHA1).